The primary structure comprises 117 residues: MADQITSATASAMSVRMPARKVRMVIDLIRGKSVAEAIAILEFTPRAASPVVIKVLKSAIANAEHNYDLDAENLVVTKAYANEGPTLKRFRPRAKGSASPINKRTSHITVVVSEKEA.

It belongs to the universal ribosomal protein uL22 family. Part of the 50S ribosomal subunit.

Its function is as follows. This protein binds specifically to 23S rRNA; its binding is stimulated by other ribosomal proteins, e.g. L4, L17, and L20. It is important during the early stages of 50S assembly. It makes multiple contacts with different domains of the 23S rRNA in the assembled 50S subunit and ribosome. The globular domain of the protein is located near the polypeptide exit tunnel on the outside of the subunit, while an extended beta-hairpin is found that lines the wall of the exit tunnel in the center of the 70S ribosome. The sequence is that of Large ribosomal subunit protein uL22 from Latilactobacillus sakei subsp. sakei (strain 23K) (Lactobacillus sakei subsp. sakei).